Consider the following 148-residue polypeptide: Dermatopontin (148 aa).

An intrachain disulfide couples C14 to C40. An N-linked (GlcNAc...) asparagine glycan is attached at N44. 2 cysteine pairs are disulfide-bonded: C66–C93 and C103–C147.

The protein belongs to the dermatopontin family. The terminal mannose residues of the polysaccharide are 3-O-methylated. No tyrosine sulfation was detected.

Its subcellular location is the secreted. It localises to the extracellular space. It is found in the extracellular matrix. Its function is as follows. Seems to mediate adhesion by cell surface integrin binding. The polypeptide is Dermatopontin (Biomphalaria glabrata (Bloodfluke planorb)).